The sequence spans 30 residues: Cyclotide psyleio E (30 aa).

Residues 1–30 (SVTPIVCGETCFGGTCNTPGCSCSWPICTK) constitute a cross-link (cyclopeptide (Ser-Lys)). 3 disulfides stabilise this stretch: cysteine 7-cysteine 21, cysteine 11-cysteine 23, and cysteine 16-cysteine 28.

In terms of processing, this is a cyclic peptide.

Its function is as follows. Probably participates in a plant defense mechanism. The polypeptide is Cyclotide psyleio E (Psychotria leiocarpa).